The chain runs to 447 residues: Na(+)/H(+) antiporter NhaA 2 (447 aa).

The next 10 membrane-spanning stretches (helical) occupy residues 34-54 (VGGVILLVAAAAALIWANSPW), 77-97 (LTLGAWAADGLLAIFFLVVGL), 115-135 (ALPIAAAVGGMVVPALIFVLV), 146-166 (GWAIPTATDIAFAVAVLAVIG), 176-196 (FLLTLAVVDDLLAITVIAVFY), 200-220 (INGLALALAAVPLALFALCVQ), 290-310 (VSAGIAIPVFAFFAAGVSIGG), 321-341 (PITLGIVLGLVLGKPIGIVLT), 359-379 (WVDVVGMSMLAGIGFTVSLLI), and 393-413 (FVKIGVLFGSLLAAGVAAVVL).

The protein belongs to the NhaA Na(+)/H(+) (TC 2.A.33) antiporter family.

The protein localises to the cell membrane. The enzyme catalyses Na(+)(in) + 2 H(+)(out) = Na(+)(out) + 2 H(+)(in). In terms of biological role, na(+)/H(+) antiporter that extrudes sodium in exchange for external protons. The polypeptide is Na(+)/H(+) antiporter NhaA 2 (Mycolicibacterium gilvum (strain PYR-GCK) (Mycobacterium gilvum (strain PYR-GCK))).